The primary structure comprises 114 residues: MDSKWAALLLLLLLLLNWGHTEEAGSWGEDQVFAGEDKGPHPPQYAHIPDRIQTPGSLFRVLLQAMDTPRRSPAFLFQPQRFGRSAWGSWSKEQLNPQARQFWSLAAPQRFGKK.

Residues 1–21 (MDSKWAALLLLLLLLLNWGHT) form the signal peptide. The propeptide occupies 22-69 (EEAGSWGEDQVFAGEDKGPHPPQYAHIPDRIQTPGSLFRVLLQAMDTP). Phenylalanine amide is present on F82. Positions 85–100 (SAWGSWSKEQLNPQAR) are excised as a propeptide. Residue F111 is modified to Phenylalanine amide.

It belongs to the FARP (FMRFamide related peptide) family.

It localises to the secreted. Morphine modulating peptides. Have wide-ranging physiologic effects, including the modulation of morphine-induced analgesia, elevation of arterial blood pressure, and increased somatostatin secretion from the pancreas. Neuropeptide FF potentiates and sensitizes ASIC1 and ASIC3 channels. The sequence is that of Pro-FMRFamide-related neuropeptide FF (Npff) from Mus musculus (Mouse).